The following is a 278-amino-acid chain: Large ribosomal subunit protein uL2 (278 aa).

The tract at residues 222-264 (GVAMNPIDHPHGGGEGRTSGGRHPVTPWGKPTKGRKTRKNKAT) is disordered.

It belongs to the universal ribosomal protein uL2 family. In terms of assembly, part of the 50S ribosomal subunit. Forms a bridge to the 30S subunit in the 70S ribosome.

One of the primary rRNA binding proteins. Required for association of the 30S and 50S subunits to form the 70S ribosome, for tRNA binding and peptide bond formation. It has been suggested to have peptidyltransferase activity; this is somewhat controversial. Makes several contacts with the 16S rRNA in the 70S ribosome. The sequence is that of Large ribosomal subunit protein uL2 from Phenylobacterium zucineum (strain HLK1).